The sequence spans 254 residues: uncharacterized protein (254 aa).

Belongs to the nucleoside-specific channel-forming outer membrane porin (Tsx) (TC 1.B.10) family.

This is an uncharacterized protein from Escherichia coli (strain K12).